Consider the following 304-residue polypeptide: Bifunctional protein FolD (304 aa).

NADP(+)-binding positions include 170 to 172 (GRS), S195, and I236.

Belongs to the tetrahydrofolate dehydrogenase/cyclohydrolase family. As to quaternary structure, homodimer.

The enzyme catalyses (6R)-5,10-methylene-5,6,7,8-tetrahydrofolate + NADP(+) = (6R)-5,10-methenyltetrahydrofolate + NADPH. It catalyses the reaction (6R)-5,10-methenyltetrahydrofolate + H2O = (6R)-10-formyltetrahydrofolate + H(+). The protein operates within one-carbon metabolism; tetrahydrofolate interconversion. In terms of biological role, catalyzes the oxidation of 5,10-methylenetetrahydrofolate to 5,10-methenyltetrahydrofolate and then the hydrolysis of 5,10-methenyltetrahydrofolate to 10-formyltetrahydrofolate. This Anaplasma phagocytophilum (strain HZ) protein is Bifunctional protein FolD.